A 192-amino-acid polypeptide reads, in one-letter code: Transcription termination/antitermination protein NusG (192 aa).

The 29-residue stretch at 140-168 folds into the KOW domain; that stretch reads VGEVVTVTDGPFETFMGTVEEIDKERNRL.

It belongs to the NusG family.

Its function is as follows. Participates in transcription elongation, termination and antitermination. This is Transcription termination/antitermination protein NusG from Rickettsia typhi (strain ATCC VR-144 / Wilmington).